The primary structure comprises 511 residues: Putative polyol transporter 2 (511 aa).

A run of 12 helical transmembrane segments spans residues F25–G45, V63–A83, Y94–T114, P117–A137, F156–A176, F186–P206, I284–V304, L324–V344, A351–L371, W384–A404, G424–L444, and G454–L474.

This sequence belongs to the major facilitator superfamily. Sugar transporter (TC 2.A.1.1) family.

The protein localises to the membrane. In terms of biological role, plasma membrane sugar-proton symporter. This Arabidopsis thaliana (Mouse-ear cress) protein is Putative polyol transporter 2 (PLT2).